We begin with the raw amino-acid sequence, 155 residues long: UPF0060 membrane protein MA_3936 (155 aa).

A run of 3 helical transmembrane segments spans residues 8–28, 35–55, and 62–82; these read LCPF…ICLW, AVFG…PTFQ, and VYAA…LFVD.

Belongs to the UPF0060 family.

It is found in the cell membrane. The chain is UPF0060 membrane protein MA_3936 from Methanosarcina acetivorans (strain ATCC 35395 / DSM 2834 / JCM 12185 / C2A).